We begin with the raw amino-acid sequence, 365 residues long: Chorismate synthase (365 aa).

Position 46 (arginine 46) interacts with NADP(+). Residues 124-126 (RAS), glycine 284, 299-303 (KPTPS), and arginine 326 each bind FMN.

The protein belongs to the chorismate synthase family. The cofactor is FMNH2.

It carries out the reaction 5-O-(1-carboxyvinyl)-3-phosphoshikimate = chorismate + phosphate. The protein operates within metabolic intermediate biosynthesis; chorismate biosynthesis; chorismate from D-erythrose 4-phosphate and phosphoenolpyruvate: step 7/7. Catalyzes the anti-1,4-elimination of the C-3 phosphate and the C-6 proR hydrogen from 5-enolpyruvylshikimate-3-phosphate (EPSP) to yield chorismate, which is the branch point compound that serves as the starting substrate for the three terminal pathways of aromatic amino acid biosynthesis. This reaction introduces a second double bond into the aromatic ring system. This is Chorismate synthase from Pyrobaculum neutrophilum (strain DSM 2338 / JCM 9278 / NBRC 100436 / V24Sta) (Thermoproteus neutrophilus).